A 482-amino-acid polypeptide reads, in one-letter code: Peptide chain release factor PrfB2, chloroplastic (482 aa).

A chloroplast-targeting transit peptide spans 1–21; it reads MLSLIIRRSRSRFIIHGIKIS.

The protein belongs to the prokaryotic/mitochondrial release factor family.

Its subcellular location is the plastid. The protein localises to the chloroplast stroma. In terms of biological role, directs the termination of translation in response to the peptide chain termination codon UGA. Required for the proper translation, stability and normal processing of UGA-containing polycistronic transcripts in chloroplasts. The sequence is that of Peptide chain release factor PrfB2, chloroplastic from Arabidopsis thaliana (Mouse-ear cress).